The primary structure comprises 212 residues: Probable NADH dehydrogenase [ubiquinone] iron-sulfur protein 8, mitochondrial (212 aa).

4Fe-4S ferredoxin-type domains lie at 104 to 133 and 143 to 172; these read RRYP…IEAE and TRYD…EGPN. Positions 113, 116, 119, 123, 152, 155, 158, and 162 each coordinate [4Fe-4S] cluster.

This sequence belongs to the complex I 23 kDa subunit family. As to quaternary structure, complex I is composed of 45 different subunits This is a component of the iron-sulfur (IP) fragment of the enzyme. The cofactor is [4Fe-4S] cluster.

It localises to the mitochondrion. It carries out the reaction a ubiquinone + NADH + 5 H(+)(in) = a ubiquinol + NAD(+) + 4 H(+)(out). Functionally, core subunit of the mitochondrial membrane respiratory chain NADH dehydrogenase (Complex I) that is believed to belong to the minimal assembly required for catalysis. Complex I functions in the transfer of electrons from NADH to the respiratory chain. The immediate electron acceptor for the enzyme is believed to be ubiquinone. This Caenorhabditis elegans protein is Probable NADH dehydrogenase [ubiquinone] iron-sulfur protein 8, mitochondrial.